The chain runs to 514 residues: 2-isopropylmalate synthase (514 aa).

Residues 5 to 268 (LIIFDTTLRD…DVGIDTSQIV (264 aa)) form the Pyruvate carboxyltransferase domain. Mn(2+)-binding residues include Asp-14, His-202, His-204, and Asn-239. Positions 395–514 (KFVSLSQRSE…KDDKVNPQRS (120 aa)) are regulatory domain.

This sequence belongs to the alpha-IPM synthase/homocitrate synthase family. LeuA type 1 subfamily. As to quaternary structure, homodimer. The cofactor is Mn(2+).

The protein resides in the cytoplasm. It carries out the reaction 3-methyl-2-oxobutanoate + acetyl-CoA + H2O = (2S)-2-isopropylmalate + CoA + H(+). It functions in the pathway amino-acid biosynthesis; L-leucine biosynthesis; L-leucine from 3-methyl-2-oxobutanoate: step 1/4. Functionally, catalyzes the condensation of the acetyl group of acetyl-CoA with 3-methyl-2-oxobutanoate (2-ketoisovalerate) to form 3-carboxy-3-hydroxy-4-methylpentanoate (2-isopropylmalate). The chain is 2-isopropylmalate synthase from Burkholderia cenocepacia (strain ATCC BAA-245 / DSM 16553 / LMG 16656 / NCTC 13227 / J2315 / CF5610) (Burkholderia cepacia (strain J2315)).